Consider the following 240-residue polypeptide: Enoyl-CoA delta isomerase 2, peroxisomal (240 aa).

A Microbody targeting signal motif is present at residues 238–240; that stretch reads PKL.

This sequence belongs to the enoyl-CoA hydratase/isomerase family.

It is found in the peroxisome. It catalyses the reaction a (3Z)-enoyl-CoA = a 4-saturated (2E)-enoyl-CoA. The catalysed reaction is a (3E)-enoyl-CoA = a 4-saturated (2E)-enoyl-CoA. Its pathway is lipid metabolism; fatty acid beta-oxidation. Functionally, able to isomerize both 3-cis and 3-trans double bonds into the 2-trans form in a range of enoyl-CoA species. Essential for the beta oxidation of unsaturated fatty acids. Involved with IBR1 and IBR3 in the peroxisomal beta-oxidation of indole-3-butyric acid (IBA) to form indole-3-acetic acid (IAA), a biologically active auxin. This chain is Enoyl-CoA delta isomerase 2, peroxisomal, found in Arabidopsis thaliana (Mouse-ear cress).